The following is a 241-amino-acid chain: GTP cyclohydrolase 1 (241 aa).

The propeptide occupies 1–11; the sequence is MEKPRGVRCTN. Residues 1–58 are disordered; it reads MEKPRGVRCTNGFPERELPRPGASRPAEKSRPPEAKGAQPADAWKAGRPRSEEDNELN. Phosphoserine occurs at positions 51 and 72. Zn(2+)-binding residues include Cys-132, His-135, and Cys-203.

It belongs to the GTP cyclohydrolase I family. In terms of assembly, toroid-shaped homodecamer, composed of two pentamers of five dimers. Interacts with AHSA1 and GCHFR/GFRP. Post-translationally, phosphorylated.

It localises to the cytoplasm. The protein localises to the nucleus. It catalyses the reaction GTP + H2O = 7,8-dihydroneopterin 3'-triphosphate + formate + H(+). It participates in cofactor biosynthesis; 7,8-dihydroneopterin triphosphate biosynthesis; 7,8-dihydroneopterin triphosphate from GTP: step 1/1. With respect to regulation, GTP shows a positive allosteric effect, and tetrahydrobiopterin inhibits the enzyme activity. Zinc is required for catalytic activity. Inhibited by Mg(2+). Functionally, may positively regulate nitric oxide synthesis in endothelial cells. May be involved in dopamine synthesis. May modify pain sensitivity and persistence. The sequence is that of GTP cyclohydrolase 1 (Gch1) from Rattus norvegicus (Rat).